The following is a 284-amino-acid chain: MLIAAMGPKIPVPAYGVGTALFKKEKGEINRTIVDSVKNALAAGFIHIDCAEVYGNEEEVGVALKEANVPRSKLFITSKVMHNVDNIPEALNESLRKLGTDYLDLYLLHSPIPFYEKKIPISEGWKAMETALGTGLVHSVGVSNFRIPDLEELLKTSTITPRVNQIEFHPQVYKAAKPLVEFCQSKGIIVEGYGPLSPLVRDAQGPVAEFTKSLESKYHVSDTQILLKWAYSKGVIPITTTSKIERMKECLNFDSFTLDKADIDELGTLGVQHHKRTFMKHMDE.

D49 is an NADPH binding site. Residues Y54 and H109 each act as proton donor in the active site. Residues S143, Q165, L196, R201, T239, T240, T241, S242, K243, and R246 each contribute to the NADPH site.

The protein belongs to the aldo/keto reductase family. As to quaternary structure, monomer.

It localises to the cytoplasm. The protein resides in the nucleus. The enzyme catalyses indole-3-ethanol + NAD(+) = indole-3-acetaldehyde + NADH + H(+). It carries out the reaction indole-3-ethanol + NADP(+) = indole-3-acetaldehyde + NADPH + H(+). This chain is NAD/NADP-dependent indole-3-acetaldehyde reductase, found in Schizosaccharomyces pombe (strain 972 / ATCC 24843) (Fission yeast).